The chain runs to 503 residues: Glutamate--tRNA ligase (503 aa).

A 'HIGH' region motif is present at residues 12–22; the sequence is PSPTGYLHVGG. Residues 259–263 carry the 'KMSKS' region motif; the sequence is KLSKR. Lys-262 provides a ligand contact to ATP.

This sequence belongs to the class-I aminoacyl-tRNA synthetase family. Glutamate--tRNA ligase type 1 subfamily. As to quaternary structure, monomer.

It localises to the cytoplasm. It carries out the reaction tRNA(Glu) + L-glutamate + ATP = L-glutamyl-tRNA(Glu) + AMP + diphosphate. Functionally, catalyzes the attachment of glutamate to tRNA(Glu) in a two-step reaction: glutamate is first activated by ATP to form Glu-AMP and then transferred to the acceptor end of tRNA(Glu). The polypeptide is Glutamate--tRNA ligase (Chloroherpeton thalassium (strain ATCC 35110 / GB-78)).